A 1865-amino-acid chain; its full sequence is MSQKSWIESTLTKRECVYIIPSSKDPHRCLPGCQICQQLVRCFCGRLVKQHACFTASLAMKYSDVKLGDHFNQAIEEWSVEKHTEQSPTDAYGVINFQGGSHSYRAKYVRLSYDTKPEVILQLLLKEWQMELPKLVISVHGGMQKFELHPRIKQLLGKGLIKAAVTTGAWILTGGVNTGVAKHVGDALKEHASRSSRKICTIGIAPWGVIENRNDLVGRDVVAPYQTLLNPLSKLNVLNNLHSHFILVDDGTVGKYGAEVRLRRELEKTINQQRIHARIGQGVPVVALIFEGGPNVILTVLEYLQESPPVPVVVCEGTGRAADLLAYIHKQTEEGGNLPDAAEPDIISTIKKTFNFGQNEALHLFQTLMECMKRKELITVFHIGSDEHQDIDVAILTALLKGTNASAFDQLILTLAWDRVDIAKNHVFVYGQQWLVGSLEQAMLDALVMDRVAFVKLLIENGVSMHKFLTIPRLEELYNTKQGPTNPMLFHLVRDVKQGNLPPGYKITLIDIGLVIEYLMGGTYRCTYTRKRFRLIYNSLGGNNRRSGRNTSSSTPQLRKSHESFGNRADKKEKMRHNHFIKTAQPYRPKIDTVMEEGKKKRTKDEIVDIDDPETKRFPYPLNELLIWACLMKRQVMARFLWQHGEESMAKALVACKIYRSMAYEAKQSDLVDDTSEELKQYSNDFGQLAVELLEQSFRQDETMAMKLLTYELKNWSNSTCLKLAVSSRLRPFVAHTCTQMLLSDMWMGRLNMRKNSWYKVILSILVPPAILLLEYKTKAEMSHIPQSQDAHQMTMDDSENNFQNITEEIPMEVFKEVRILDSNEGKNEMEIQMKSKKLPITRKFYAFYHAPIVKFWFNTLAYLGFLMLYTFVVLVQMEQLPSVQEWIVIAYIFTYAIEKVREIFMSEAGKVNQKIKVWFSDYFNISDTIAIISFFIGFGLRFGAKWNFANAYDNHVFVAGRLIYCLNIIFWYVRLLDFLAVNQQAGPYVMMIGKMVANMFYIVVIMALVLLSFGVPRKAILYPHEAPSWTLAKDIVFHPYWMIFGEVYAYEIDVCANDSVIPQICGPGTWLTPFLQAVYLFVQYIIMVNLLIAFFNNVYLQVKAISNIVWKYQRYHFIMAYHEKPVLPPPLIILSHIVSLFCCICKRRKKDKTSDGPKLFLTEEDQKKLHDFEEQCVEMYFNEKDDKFHSGSEERIRVTFERVEQMCIQIKEVGDRVNYIKRSLQSLDSQIGHLQDLSALTVDTLKTLTAQKASEASKVHNEITRELSISKHLAQNLIDDGPVRPSVWKKHGVVNTLSSSLPQGDLESNNPFHCNILMKDDKDPQCNIFGQDLPAVPQRKEFNFPEAGSSSGALFPSAVSPPELRQRLHGVELLKIFNKNQKLGSSSTSIPHLSSPPTKFFVSTPSQPSCKSHLETGTKDQETVCSKATEGDNTEFGAFVGHRDSMDLQRFKETSNKIKILSNNNTSENTLKRVSSLAGFTDCHRTSIPVHSKQAEKISRRPSTEDTHEVDSKAALIPDWLQDRPSNREMPSEEGTLNGLTSPFKPAMDTNYYYSAVERNNLMRLSQSIPFTPVPPRGEPVTVYRLEESSPNILNNSMSSWSQLGLCAKIEFLSKEEMGGGLRRAVKVQCTWSEHDILKSGHLYIIKSFLPEVVNTWSSIYKEDTVLHLCLREIQQQRAAQKLTFAFNQMKPKSIPYSPRFLEVFLLYCHSAGQWFAVEECMTGEFRKYNNNNGDEIIPTNTLEEIMLAFSHWTYEYTRGELLVLDLQGVGENLTDPSVIKAEEKRSCDMVFGPANLGEDAIKNFRAKHHCNSCCRKLKLPDLKRNDYTPDKIIFPQDEPSDLNLQPGNSTKESESTNSVRLML.

At methionine 1 the chain carries N-acetylmethionine. Over 1-850 (MSQKSWIEST…ITRKFYAFYH (850 aa)) the chain is Cytoplasmic. Serine 101 carries the phosphoserine modification. Positions 544–555 (NRRSGRNTSSST) are enriched in low complexity. The segment at 544 to 575 (NRRSGRNTSSSTPQLRKSHESFGNRADKKEKM) is disordered. Over residues 560 to 573 (KSHESFGNRADKKE) the composition is skewed to basic and acidic residues. The helical transmembrane segment at 851 to 876 (APIVKFWFNTLAYLGFLMLYTFVVLV) threads the bilayer. The Extracellular portion of the chain corresponds to 877-882 (QMEQLP). A helical membrane pass occupies residues 883-904 (SVQEWIVIAYIFTYAIEKVREI). The Cytoplasmic portion of the chain corresponds to 905–923 (FMSEAGKVNQKIKVWFSDY). A helical transmembrane segment spans residues 924–943 (FNISDTIAIISFFIGFGLRF). Over 944-956 (GAKWNFANAYDNH) the chain is Extracellular. The chain crosses the membrane as a helical span at residues 957–980 (VFVAGRLIYCLNIIFWYVRLLDFL). Topologically, residues 981–999 (AVNQQAGPYVMMIGKMVAN) are cytoplasmic. The helical transmembrane segment at 1000–1023 (MFYIVVIMALVLLSFGVPRKAILY) threads the bilayer. The Extracellular portion of the chain corresponds to 1024 to 1025 (PH). The pore-forming intramembrane region spans 1026 to 1066 (EAPSWTLAKDIVFHPYWMIFGEVYAYEIDVCANDSVIPQIC). Residues 1067–1069 (GPG) lie on the Extracellular side of the membrane. A helical membrane pass occupies residues 1070–1098 (TWLTPFLQAVYLFVQYIIMVNLLIAFFNN). Residues 1099-1865 (VYLQVKAISN…ESTNSVRLML (767 aa)) are Cytoplasmic-facing. S-palmitoyl cysteine attachment occurs at residues cysteine 1143, cysteine 1144, and cysteine 1146. Phosphothreonine; by autocatalysis is present on threonine 1163. Phosphoserine; by autocatalysis occurs at positions 1191 and 1193. Positions 1198–1250 (RVTFERVEQMCIQIKEVGDRVNYIKRSLQSLDSQIGHLQDLSALTVDTLKTLT) form a coiled coil. Phosphoserine is present on serine 1224. Phosphoserine; by autocatalysis occurs at positions 1255 and 1258. A Phosphothreonine; by autocatalysis modification is found at threonine 1265. At serine 1287 the chain carries Phosphoserine; by autocatalysis. Position 1301 is a phosphoserine (serine 1301). Position 1358 is a phosphoserine; by autocatalysis (serine 1358). A phosphoserine mark is found at serine 1361 and serine 1386. The segment covering 1386–1398 (SSSTSIPHLSSPP) has biased composition (low complexity). The disordered stretch occupies residues 1386–1407 (SSSTSIPHLSSPPTKFFVSTPS). Residues serine 1387 and serine 1390 each carry the phosphoserine; by autocatalysis modification. A phosphoserine mark is found at serine 1395 and serine 1396. At serine 1404 the chain carries Phosphoserine; by autocatalysis. Position 1405 is a phosphothreonine; by autocatalysis (threonine 1405). Serine 1407 carries the phosphoserine; by autocatalysis modification. Position 1435 is a phosphothreonine; by autocatalysis (threonine 1435). Position 1446 is a phosphoserine; by autocatalysis (serine 1446). Threonine 1455 bears the Phosphothreonine; by autocatalysis mark. Residues serine 1456 and serine 1463 each carry the phosphoserine; by autocatalysis modification. Threonine 1467 carries the phosphothreonine modification. Position 1468 is a phosphoserine; by autocatalysis (serine 1468). A Phosphothreonine; by autocatalysis modification is found at threonine 1471. A phosphoserine; by autocatalysis mark is found at serine 1476 and serine 1477. A Phosphothreonine; by autocatalysis modification is found at threonine 1482. The interval 1492–1511 (HSKQAEKISRRPSTEDTHEV) is disordered. Residue serine 1493 is modified to Phosphoserine; by autocatalysis. The segment covering 1494 to 1511 (KQAEKISRRPSTEDTHEV) has biased composition (basic and acidic residues). Serine 1500 bears the Phosphoserine mark. A Phosphoserine; by autocatalysis modification is found at serine 1504. At threonine 1508 the chain carries Phosphothreonine; by autocatalysis. A phosphoserine; by autocatalysis mark is found at serine 1513, serine 1527, and serine 1533. The interval 1524–1543 (DRPSNREMPSEEGTLNGLTS) is disordered. Threonine 1537 and threonine 1542 each carry phosphothreonine; by autocatalysis. A Phosphoserine; by autocatalysis modification is found at serine 1543. Threonine 1551 is subject to Phosphothreonine; by autocatalysis. Serine 1567 and serine 1569 each carry phosphoserine; by autocatalysis. Phosphothreonine; by autocatalysis is present on threonine 1583. An Alpha-type protein kinase domain is found at 1594-1824 (ILNNSMSSWS…CCRKLKLPDL (231 aa)). Residues serine 1598 and serine 1615 each carry the phosphoserine; by autocatalysis modification. ADP-binding residues include glycine 1621, glycine 1622, leucine 1623, arginine 1624, and lysine 1648. Serine 1660 is modified (phosphoserine; by autocatalysis). Phosphothreonine; by autocatalysis is present on threonine 1685. Positions 1720, 1721, and 1723 each coordinate ADP. Histidine 1753 is a binding site for Zn(2+). The active-site Proton acceptor is the aspartate 1767. Residue aspartate 1777 coordinates ADP. Serine 1779 is modified (phosphoserine; by autocatalysis). Residues histidine 1810, cysteine 1812, and cysteine 1816 each coordinate Zn(2+). Threonine 1830 is subject to Phosphothreonine; by autocatalysis. Positions 1836–1865 (FPQDEPSDLNLQPGNSTKESESTNSVRLML) are disordered. A compositionally biased stretch (polar residues) spans 1844–1865 (LNLQPGNSTKESESTNSVRLML). At serine 1851 the chain carries Phosphoserine. Serine 1860 is subject to Phosphoserine; by autocatalysis.

In the C-terminal section; belongs to the protein kinase superfamily. Alpha-type protein kinase family. ALPK subfamily. It in the N-terminal section; belongs to the transient receptor (TC 1.A.4) family. LTrpC subfamily. TRPM7 sub-subfamily. Homotetramer. Interacts with PLCB1. Forms heteromers with TRPM6; heteromeric channels are functionally different from the homomeric channels. Zn(2+) serves as cofactor. Post-translationally, palmitoylated; palmitoylation at Cys-1143, Cys-1144 and Cys-1146 promotes TRPM7 trafficking from the Golgi to the surface membrane. Autophosphorylated; autophosphorylation of C-terminus regulates TRPM7 kinase activity towards its substrates. In terms of processing, the C-terminal kinase domain can be cleaved from the channel segment in a cell-type-specific fashion. TRPM7 is cleaved by caspase-8, dissociating the kinase from the ion-conducting pore. The cleaved kinase fragments (M7CKs) can translocate to the cell nucleus and binds chromatin-remodeling complex proteins in a Zn(2+)-dependent manner to ultimately phosphorylate specific Ser/Thr residues of histones.

Its subcellular location is the cell membrane. It is found in the cytoplasmic vesicle membrane. The protein localises to the nucleus. The catalysed reaction is L-seryl-[protein] + ATP = O-phospho-L-seryl-[protein] + ADP + H(+). It catalyses the reaction L-threonyl-[protein] + ATP = O-phospho-L-threonyl-[protein] + ADP + H(+). It carries out the reaction Mg(2+)(in) = Mg(2+)(out). The enzyme catalyses Ca(2+)(in) = Ca(2+)(out). The catalysed reaction is Zn(2+)(in) = Zn(2+)(out). With respect to regulation, channel displays constitutive activity. Channel activity is negatively regulated by cytosolic Mg(2+) and Mg-ATP. Channel activity is negatively regulated by low intracellular pH. Resting free cytosolic Mg(2+) and Mg-ATP concentrations seem to be sufficient to block native TRPM7 channel activity. TRPM7 channel activity is highly dependent on membrane levels of phosphatidylinositol 4,5 bisphosphate (PIP2). PIP2 hydrolysis negatively regulates TRPM7 channel activity. TRPM7 kinase activity does not affect channel activity. The kinase activity is controlled through the autophosphorylation of a serine/threonine-rich region located N-terminal to the catalytic domain. In terms of biological role, bifunctional protein that combines an ion channel with an intrinsic kinase domain, enabling it to modulate cellular functions either by conducting ions through the pore or by phosphorylating downstream proteins via its kinase domain. The channel is highly permeable to divalent cations, specifically calcium (Ca2+), magnesium (Mg2+) and zinc (Zn2+) and mediates their influx. Controls a wide range of biological processes such as Ca2(+), Mg(2+) and Zn(2+) homeostasis, vesicular Zn(2+) release channel and intracellular Ca(2+) signaling, embryonic development, immune responses, cell motility, proliferation and differentiation. The C-terminal alpha-kinase domain autophosphorylates cytoplasmic residues of TRPM7. In vivo, TRPM7 phosphorylates SMAD2, suggesting that TRPM7 kinase may play a role in activating SMAD signaling pathways. In vitro, TRPM7 kinase phosphorylates ANXA1 (annexin A1), myosin II isoforms and a variety of proteins with diverse cellular functions. The cleaved channel exhibits substantially higher current and potentiates Fas receptor signaling. Functionally, the C-terminal kinase domain can be cleaved from the channel segment in a cell-type-specific fashion. In immune cells, the TRPM7 kinase domain is clipped from the channel domain by caspases in response to Fas-receptor stimulation. The cleaved kinase fragments can translocate to the nucleus, and bind chromatin-remodeling complex proteins in a Zn(2+)-dependent manner to ultimately phosphorylate specific Ser/Thr residues of histones known to be functionally important for cell differentiation and embryonic development. This is Transient receptor potential cation channel subfamily M member 7 (TRPM7) from Homo sapiens (Human).